Reading from the N-terminus, the 179-residue chain is MARLKEIYHKDVMQKLRSDFSYANIMEVPKIVKVVVNMGLGEAIQNVKILDSAAAELAAITGQKTVITKAKKSIATFKLRQGMPIGCMVTLRRAKMYEFLDRLMNVSLPRVRDFKGVSAKAFDGKGNYTLGIKEQLIFPEINYDAVDKIKGMNITIVTSAKTDEEGRALLKYLGMPFRN.

This sequence belongs to the universal ribosomal protein uL5 family. Part of the 50S ribosomal subunit; part of the 5S rRNA/L5/L18/L25 subcomplex. Contacts the 5S rRNA and the P site tRNA. Forms a bridge to the 30S subunit in the 70S ribosome.

Its function is as follows. This is one of the proteins that bind and probably mediate the attachment of the 5S RNA into the large ribosomal subunit, where it forms part of the central protuberance. In the 70S ribosome it contacts protein S13 of the 30S subunit (bridge B1b), connecting the 2 subunits; this bridge is implicated in subunit movement. Contacts the P site tRNA; the 5S rRNA and some of its associated proteins might help stabilize positioning of ribosome-bound tRNAs. This chain is Large ribosomal subunit protein uL5, found in Pelobacter propionicus (strain DSM 2379 / NBRC 103807 / OttBd1).